The primary structure comprises 440 residues: tRNA-2-methylthio-N(6)-dimethylallyladenosine synthase (440 aa).

Positions 3–119 (KKFFIKTFGC…LPELINQAQA (117 aa)) constitute an MTTase N-terminal domain. Residues cysteine 12, cysteine 48, cysteine 82, cysteine 158, cysteine 162, and cysteine 165 each coordinate [4Fe-4S] cluster. Residues 144–374 (RDNKYCAYVT…LELQKSILSE (231 aa)) enclose the Radical SAM core domain. One can recognise a TRAM domain in the interval 377–437 (KKYEGTVQEV…PFSLEGELLE (61 aa)).

The protein belongs to the methylthiotransferase family. MiaB subfamily. As to quaternary structure, monomer. [4Fe-4S] cluster serves as cofactor.

Its subcellular location is the cytoplasm. The enzyme catalyses N(6)-dimethylallyladenosine(37) in tRNA + (sulfur carrier)-SH + AH2 + 2 S-adenosyl-L-methionine = 2-methylsulfanyl-N(6)-dimethylallyladenosine(37) in tRNA + (sulfur carrier)-H + 5'-deoxyadenosine + L-methionine + A + S-adenosyl-L-homocysteine + 2 H(+). In terms of biological role, catalyzes the methylthiolation of N6-(dimethylallyl)adenosine (i(6)A), leading to the formation of 2-methylthio-N6-(dimethylallyl)adenosine (ms(2)i(6)A) at position 37 in tRNAs that read codons beginning with uridine. The chain is tRNA-2-methylthio-N(6)-dimethylallyladenosine synthase from Aquifex aeolicus (strain VF5).